The sequence spans 581 residues: ATP-dependent lipid A-core flippase (581 aa).

A run of 5 helical transmembrane segments spans residues 15–35 (LWPIISPFKSGLIISIVALII), 62–82 (ISIWMPLAIVALMLSRGSSGF), 152–172 (IIGLFFMMFFHSWKLSSVLII), 252–272 (IIIQFISSITLAVILYISSLP), and 274–294 (IIDELTAGTITVIFTSMIALM). The ABC transmembrane type-1 domain occupies 27-309 (IISIVALIIN…LTNVNANFQK (283 aa)). In terms of domain architecture, ABC transporter spans 341–577 (IKFKNITFTY…KGVYAQIYRL (237 aa)). 375–382 (GSSGAGKS) contributes to the ATP binding site.

It belongs to the ABC transporter superfamily. Lipid exporter (TC 3.A.1.106) family. As to quaternary structure, homodimer.

The protein localises to the cell membrane. The enzyme catalyses ATP + H2O + lipid A-core oligosaccharideSide 1 = ADP + phosphate + lipid A-core oligosaccharideSide 2.. Functionally, involved in lipopolysaccharide (LPS) biosynthesis. Translocates lipid A-core from the inner to the outer leaflet of the inner membrane. Transmembrane domains (TMD) form a pore in the inner membrane and the ATP-binding domain (NBD) is responsible for energy generation. The sequence is that of ATP-dependent lipid A-core flippase from Wigglesworthia glossinidia brevipalpis.